Reading from the N-terminus, the 493-residue chain is Cytoplasmic tRNA 2-thiolation protein 2 (493 aa).

S489 bears the Phosphoserine mark.

This sequence belongs to the CTU2/NCS2 family. As to quaternary structure, interacts with NCS6 and URM1. May act by forming a heterodimer with NCS6.

It is found in the cytoplasm. It participates in tRNA modification; 5-methoxycarbonylmethyl-2-thiouridine-tRNA biosynthesis. Plays a central role in 2-thiolation of mcm(5)S(2)U at tRNA wobble positions of tRNA(Lys), tRNA(Glu) and tRNA(Gln). May act by forming a heterodimer with NCS6 that ligates sulfur from thiocarboxylated URM1 onto the uridine of tRNAs at wobble position. Prior mcm(5) tRNA modification by the elongator complex is required for 2-thiolation. May also be involved in protein urmylation and in invasive and pseudohyphal growth. Inhibits replication of Brome mosaic virus. This is Cytoplasmic tRNA 2-thiolation protein 2 from Saccharomyces cerevisiae (strain ATCC 204508 / S288c) (Baker's yeast).